The primary structure comprises 261 residues: (3R)-3-hydroxyacyl-CoA dehydrogenase (261 aa).

Residues Leu-15 to Ile-23 and Asp-42 to Leu-43 each bind NAD(+). A Phosphoserine modification is found at Ser-60. Position 74–76 (Ala-74–Val-76) interacts with NAD(+). Ser-156 is a substrate binding site. The residue at position 160 (Lys-160) is an N6-succinyllysine. Tyr-169 functions as the Proton acceptor in the catalytic mechanism. NAD(+) contacts are provided by residues Tyr-169–Lys-173 and Ile-202–Thr-204. Position 173 is an N6-succinyllysine (Lys-173).

Belongs to the short-chain dehydrogenases/reductases (SDR) family. Heterotetramer with CBR4; contains two molecules of HSD17B8 and CBR4. In terms of tissue distribution, widely expressed, particularly abundant in prostate, placenta and kidney. Expressed at protein level in various tissues like brain, cerebellum, heart, lung, kidney, ovary, testis, adrenals and prostate.

The protein resides in the mitochondrion matrix. The catalysed reaction is a (3R)-3-hydroxyacyl-CoA + NAD(+) = a 3-oxoacyl-CoA + NADH + H(+). It catalyses the reaction 17beta-estradiol + NAD(+) = estrone + NADH + H(+). It carries out the reaction testosterone + NAD(+) = androst-4-ene-3,17-dione + NADH + H(+). The enzyme catalyses 17beta-hydroxy-5alpha-androstan-3-one + NAD(+) = 5alpha-androstan-3,17-dione + NADH + H(+). It functions in the pathway steroid biosynthesis; estrogen biosynthesis. Its pathway is lipid metabolism; fatty acid biosynthesis. It participates in lipid metabolism; mitochondrial fatty acid beta-oxidation. Its function is as follows. Required for the solubility and assembly of the heterotetramer 3-ketoacyl-[acyl carrier protein] (ACP) reductase functional complex (KAR or KAR1) that forms part of the mitochondrial fatty acid synthase (mtFAS). Alpha-subunit of the KAR complex that acts as a scaffold protein required for the stability of carbonyl reductase type-4 (CBR4, beta-subunit of the KAR complex) and for its 3-ketoacyl-ACP reductase activity, thereby participating in mitochondrial fatty acid biosynthesis. Catalyzes the NAD-dependent conversion of (3R)-3-hydroxyacyl-CoA into 3-ketoacyl-CoA (3-oxoacyl-CoA) with no chain length preference; this enzymatic activity is not needed for the KAR function. Prefers (3R)-3-hydroxyacyl-CoA over (3S)-3-hydroxyacyl-CoA and displays enzymatic activity only in the presence of NAD(+). Cooperates with enoyl-CoA hydratase 1 in mitochondria, together they constitute an alternative route to the auxiliary enzyme pathways for the breakdown of Z-PUFA (cis polyunsaturated fatty acid) enoyl-esters. NAD-dependent 17-beta-hydroxysteroid dehydrogenase with highest activity towards estradiol (17beta-estradiol or E2). Has very low activity towards testosterone and dihydrotestosterone (17beta-hydroxy-5alpha-androstan-3-one). Primarily an oxidative enzyme, it can switch to a reductive mode determined in the appropriate physiologic milieu and catalyze the reduction of estrone (E1) to form biologically active 17beta-estradiol. This is (3R)-3-hydroxyacyl-CoA dehydrogenase (HSD17B8) from Homo sapiens (Human).